Reading from the N-terminus, the 22-residue chain is Brevinin-1OKc (22 aa).

The residue at position 22 (K22) is a Lysine amide.

In terms of tissue distribution, expressed by the skin glands.

It localises to the secreted. In terms of biological role, antimicrobial peptide. Active against Gram-negative bacterium E.coli (MIC=6 uM) and against Gram-positive bacterium S.aureus (MIC=12.5 uM). The polypeptide is Brevinin-1OKc (Nidirana okinavana (Kampira Falls frog)).